We begin with the raw amino-acid sequence, 442 residues long: tRNA modification GTPase MnmE (442 aa).

The (6S)-5-formyl-5,6,7,8-tetrahydrofolate site is built by R24, E84, and R124. A TrmE-type G domain is found at 218–366 (GARVALFGPV…LRDDMLGRLW (149 aa)). GTP contacts are provided by residues 228–233 (NAGKST), 247–253 (DDEPGTT), and 272–275 (DTAG). Residues S232 and T253 each contribute to the Mg(2+) site. A (6S)-5-formyl-5,6,7,8-tetrahydrofolate-binding site is contributed by K442.

Belongs to the TRAFAC class TrmE-Era-EngA-EngB-Septin-like GTPase superfamily. TrmE GTPase family. In terms of assembly, homodimer. Heterotetramer of two MnmE and two MnmG subunits. K(+) is required as a cofactor.

It localises to the cytoplasm. Exhibits a very high intrinsic GTPase hydrolysis rate. Involved in the addition of a carboxymethylaminomethyl (cmnm) group at the wobble position (U34) of certain tRNAs, forming tRNA-cmnm(5)s(2)U34. This chain is tRNA modification GTPase MnmE, found in Myxococcus xanthus (strain DK1622).